The chain runs to 398 residues: 2-amino-3-ketobutyrate coenzyme A ligase (398 aa).

111–112 contributes to the pyridoxal 5'-phosphate binding site; sequence CF. His136 is a binding site for substrate. Pyridoxal 5'-phosphate is bound by residues Ser185, 210 to 213, 241 to 244, and 274 to 275; these read DDSH, TLGK, and SN. Lys244 carries the post-translational modification N6-(pyridoxal phosphate)lysine. Arg368 contributes to the substrate binding site.

Belongs to the class-II pyridoxal-phosphate-dependent aminotransferase family. As to quaternary structure, homodimer. The cofactor is pyridoxal 5'-phosphate.

It carries out the reaction glycine + acetyl-CoA = (2S)-2-amino-3-oxobutanoate + CoA. It participates in amino-acid degradation; L-threonine degradation via oxydo-reductase pathway; glycine from L-threonine: step 2/2. Catalyzes the cleavage of 2-amino-3-ketobutyrate to glycine and acetyl-CoA. This chain is 2-amino-3-ketobutyrate coenzyme A ligase, found in Salmonella typhimurium (strain LT2 / SGSC1412 / ATCC 700720).